We begin with the raw amino-acid sequence, 494 residues long: Glycerol kinase (494 aa).

Threonine 13 contacts ADP. Residues threonine 13, threonine 14, and serine 15 each contribute to the ATP site. Sn-glycerol 3-phosphate is bound at residue threonine 13. Arginine 17 contacts ADP. Residues arginine 83, glutamate 84, tyrosine 135, and aspartate 244 each coordinate sn-glycerol 3-phosphate. Arginine 83, glutamate 84, tyrosine 135, aspartate 244, and glutamine 245 together coordinate glycerol. ADP is bound by residues threonine 266 and glycine 309. Residues threonine 266, glycine 309, glutamine 313, and glycine 410 each coordinate ATP. Residues glycine 410 and asparagine 414 each contribute to the ADP site.

Belongs to the FGGY kinase family.

It catalyses the reaction glycerol + ATP = sn-glycerol 3-phosphate + ADP + H(+). It functions in the pathway polyol metabolism; glycerol degradation via glycerol kinase pathway; sn-glycerol 3-phosphate from glycerol: step 1/1. With respect to regulation, inhibited by fructose 1,6-bisphosphate (FBP). In terms of biological role, key enzyme in the regulation of glycerol uptake and metabolism. Catalyzes the phosphorylation of glycerol to yield sn-glycerol 3-phosphate. This is Glycerol kinase from Shewanella sp. (strain MR-7).